Reading from the N-terminus, the 176-residue chain is Peptide deformylase (176 aa).

Residues C97 and H139 each contribute to the Fe cation site. E140 is a catalytic residue. Position 143 (H143) interacts with Fe cation.

It belongs to the polypeptide deformylase family. Fe(2+) is required as a cofactor.

The enzyme catalyses N-terminal N-formyl-L-methionyl-[peptide] + H2O = N-terminal L-methionyl-[peptide] + formate. Removes the formyl group from the N-terminal Met of newly synthesized proteins. Requires at least a dipeptide for an efficient rate of reaction. N-terminal L-methionine is a prerequisite for activity but the enzyme has broad specificity at other positions. The polypeptide is Peptide deformylase (Thermomicrobium roseum (strain ATCC 27502 / DSM 5159 / P-2)).